Reading from the N-terminus, the 668-residue chain is UvrABC system protein B (668 aa).

The Helicase ATP-binding domain maps to 25 to 176 (THLQSGHSRQ…DQRQLLRNLA (152 aa)). ATP is bound at residue 38 to 45 (GATGTGKT). The short motif at 91 to 114 (YYDYYQPEAYIPVTDTFIEKTASI) is the Beta-hairpin element. The region spanning 429 to 591 (QVDDLLAEIQ…ITPQPVKKGS (163 aa)) is the Helicase C-terminal domain. The region spanning 626–661 (PELITQLEAQMKEAAKNLEFEEAAKYRDRIKNLRSK) is the UVR domain.

This sequence belongs to the UvrB family. As to quaternary structure, forms a heterotetramer with UvrA during the search for lesions. Interacts with UvrC in an incision complex.

It is found in the cytoplasm. Its function is as follows. The UvrABC repair system catalyzes the recognition and processing of DNA lesions. A damage recognition complex composed of 2 UvrA and 2 UvrB subunits scans DNA for abnormalities. Upon binding of the UvrA(2)B(2) complex to a putative damaged site, the DNA wraps around one UvrB monomer. DNA wrap is dependent on ATP binding by UvrB and probably causes local melting of the DNA helix, facilitating insertion of UvrB beta-hairpin between the DNA strands. Then UvrB probes one DNA strand for the presence of a lesion. If a lesion is found the UvrA subunits dissociate and the UvrB-DNA preincision complex is formed. This complex is subsequently bound by UvrC and the second UvrB is released. If no lesion is found, the DNA wraps around the other UvrB subunit that will check the other stand for damage. The polypeptide is UvrABC system protein B (Acaryochloris marina (strain MBIC 11017)).